Consider the following 215-residue polypeptide: Fibrillarin-like rRNA/tRNA 2'-O-methyltransferase (215 aa).

The segment at 1-29 (MKASSSLPDGVQRRQFDNRSRLTTHGTTV) is disordered. The span at 11 to 20 (VQRRQFDNRS) shows a compositional bias: basic and acidic residues. S-adenosyl-L-methionine contacts are provided by residues 76 to 77 (TT), 92 to 93 (EF), 117 to 118 (DA), and 138 to 141 (DVAT).

Belongs to the methyltransferase superfamily. Fibrillarin family. Interacts with nop5. Component of box C/D small ribonucleoprotein (sRNP) particles that contain rpl7ae, FlpA and nop5, plus a guide RNA.

Functionally, involved in pre-rRNA and tRNA processing. Utilizes the methyl donor S-adenosyl-L-methionine to catalyze the site-specific 2'-hydroxyl methylation of ribose moieties in rRNA and tRNA. Site specificity is provided by a guide RNA that base pairs with the substrate. Methylation occurs at a characteristic distance from the sequence involved in base pairing with the guide RNA. In Haloquadratum walsbyi (strain DSM 16790 / HBSQ001), this protein is Fibrillarin-like rRNA/tRNA 2'-O-methyltransferase.